The sequence spans 225 residues: Leucyl/phenylalanyl-tRNA--protein transferase (225 aa).

This sequence belongs to the L/F-transferase family.

The protein localises to the cytoplasm. It catalyses the reaction N-terminal L-lysyl-[protein] + L-leucyl-tRNA(Leu) = N-terminal L-leucyl-L-lysyl-[protein] + tRNA(Leu) + H(+). The catalysed reaction is N-terminal L-arginyl-[protein] + L-leucyl-tRNA(Leu) = N-terminal L-leucyl-L-arginyl-[protein] + tRNA(Leu) + H(+). It carries out the reaction L-phenylalanyl-tRNA(Phe) + an N-terminal L-alpha-aminoacyl-[protein] = an N-terminal L-phenylalanyl-L-alpha-aminoacyl-[protein] + tRNA(Phe). Its function is as follows. Functions in the N-end rule pathway of protein degradation where it conjugates Leu, Phe and, less efficiently, Met from aminoacyl-tRNAs to the N-termini of proteins containing an N-terminal arginine or lysine. This is Leucyl/phenylalanyl-tRNA--protein transferase from Nitrobacter hamburgensis (strain DSM 10229 / NCIMB 13809 / X14).